A 197-amino-acid chain; its full sequence is dITP/XTP pyrophosphatase (197 aa).

8–13 (TGNAGK) serves as a coordination point for substrate. The Mg(2+) site is built by E40 and D69. D69 (proton acceptor) is an active-site residue. Residues S70, 154–157 (FGYD), K177, and 182–183 (HR) each bind substrate.

Belongs to the HAM1 NTPase family. Homodimer. It depends on Mg(2+) as a cofactor.

The catalysed reaction is XTP + H2O = XMP + diphosphate + H(+). The enzyme catalyses dITP + H2O = dIMP + diphosphate + H(+). It carries out the reaction ITP + H2O = IMP + diphosphate + H(+). In terms of biological role, pyrophosphatase that catalyzes the hydrolysis of nucleoside triphosphates to their monophosphate derivatives, with a high preference for the non-canonical purine nucleotides XTP (xanthosine triphosphate), dITP (deoxyinosine triphosphate) and ITP. Seems to function as a house-cleaning enzyme that removes non-canonical purine nucleotides from the nucleotide pool, thus preventing their incorporation into DNA/RNA and avoiding chromosomal lesions. This Escherichia coli O157:H7 protein is dITP/XTP pyrophosphatase (rdgB).